The following is a 474-amino-acid chain: Iroquois-class homeodomain protein irx-5 (474 aa).

Residues 109 to 171 (DPAYRKNASR…NARRRLKKEN (63 aa)) constitute a DNA-binding region (homeobox; TALE-type). 3 disordered regions span residues 174 to 222 (TWTP…SPDG), 252 to 294 (ERNG…IQQL), and 453 to 474 (SQSQDDLNKGTPYEMKKGMSSI). Over residues 182–199 (EDEDDDENIDLEKNEEDD) the composition is skewed to acidic residues. The span at 263–273 (PPTPPLCPPDQ) shows a compositional bias: pro residues.

Belongs to the TALE/IRO homeobox family. In terms of tissue distribution, early in gastrulation, expressed in cells beneath the blastopore lip. Subsequently expressed in the neural plate in overlapping patterns with other irx members, which all share an anterior border of expression. At the time of neural tube closure (stage 19) in regions of the midbrain, hindbrain, neural tube and optic vesicle, where expression continues during tailbud stages. In stage 34, expressed throughout the eye retina. Does not appear to be expressed in the developing heart or pronephros.

The protein resides in the nucleus. Functionally, acts partially redundantly with other irx members in neural patterning. Required for formation of the posterior forebrain, midbrain, hindbrain, and to a lesser extent, spinal cord. Patterns the neuroectoderm in both the anterior/posterior and dorsal/ventral axes. Does not appear to play a role in pronephros kidney development. Involved in craniofacial and gonadal development. Modulates the migration of progenitor cell populations in branchial arches and gonads by repressing CXCL12. The chain is Iroquois-class homeodomain protein irx-5 (irx5) from Xenopus laevis (African clawed frog).